A 451-amino-acid polypeptide reads, in one-letter code: Bifunctional protein GlmU (451 aa).

Residues 1–231 (MDSPLAIIVL…ADEVAGINSR (231 aa)) form a pyrophosphorylase region. UDP-N-acetyl-alpha-D-glucosamine is bound by residues 10-13 (LAAG), Lys-24, Gln-74, 79-80 (GT), 102-104 (YGD), Gly-142, Glu-156, Asn-171, and Asn-229. Mg(2+) is bound at residue Asp-104. Asn-229 serves as a coordination point for Mg(2+). The segment at 232 to 252 (GELAEAEGRWQQRRRAAAMAD) is linker. Residues 253 to 451 (GASLIAPETV…MKKKKAEKKS (199 aa)) form an N-acetyltransferase region. UDP-N-acetyl-alpha-D-glucosamine contacts are provided by Arg-318 and Lys-336. The active-site Proton acceptor is His-348. 2 residues coordinate UDP-N-acetyl-alpha-D-glucosamine: Tyr-351 and Asn-362. Residues Ala-365, 371–372 (NY), Ser-390, Ala-408, and Arg-425 each bind acetyl-CoA.

It in the N-terminal section; belongs to the N-acetylglucosamine-1-phosphate uridyltransferase family. This sequence in the C-terminal section; belongs to the transferase hexapeptide repeat family. In terms of assembly, homotrimer. The cofactor is Mg(2+).

It is found in the cytoplasm. It catalyses the reaction alpha-D-glucosamine 1-phosphate + acetyl-CoA = N-acetyl-alpha-D-glucosamine 1-phosphate + CoA + H(+). The enzyme catalyses N-acetyl-alpha-D-glucosamine 1-phosphate + UTP + H(+) = UDP-N-acetyl-alpha-D-glucosamine + diphosphate. Its pathway is nucleotide-sugar biosynthesis; UDP-N-acetyl-alpha-D-glucosamine biosynthesis; N-acetyl-alpha-D-glucosamine 1-phosphate from alpha-D-glucosamine 6-phosphate (route II): step 2/2. It participates in nucleotide-sugar biosynthesis; UDP-N-acetyl-alpha-D-glucosamine biosynthesis; UDP-N-acetyl-alpha-D-glucosamine from N-acetyl-alpha-D-glucosamine 1-phosphate: step 1/1. It functions in the pathway bacterial outer membrane biogenesis; LPS lipid A biosynthesis. Functionally, catalyzes the last two sequential reactions in the de novo biosynthetic pathway for UDP-N-acetylglucosamine (UDP-GlcNAc). The C-terminal domain catalyzes the transfer of acetyl group from acetyl coenzyme A to glucosamine-1-phosphate (GlcN-1-P) to produce N-acetylglucosamine-1-phosphate (GlcNAc-1-P), which is converted into UDP-GlcNAc by the transfer of uridine 5-monophosphate (from uridine 5-triphosphate), a reaction catalyzed by the N-terminal domain. The sequence is that of Bifunctional protein GlmU from Novosphingobium aromaticivorans (strain ATCC 700278 / DSM 12444 / CCUG 56034 / CIP 105152 / NBRC 16084 / F199).